The sequence spans 182 residues: Biotin carboxyl carrier protein of acetyl-CoA carboxylase (182 aa).

The disordered stretch occupies residues 70–95 (AAPSPSPEPGTSRAADHAVTSSGSQP). In terms of domain architecture, Biotinyl-binding spans 104 to 180 (LAEVASPMVG…EYNQPLMRIK (77 aa)). Lysine 146 bears the N6-biotinyllysine mark.

As to quaternary structure, homodimer.

The protein operates within lipid metabolism; fatty acid biosynthesis. In terms of biological role, this protein is a component of the acetyl coenzyme A carboxylase complex; first, biotin carboxylase catalyzes the carboxylation of the carrier protein and then the transcarboxylase transfers the carboxyl group to form malonyl-CoA. The polypeptide is Biotin carboxyl carrier protein of acetyl-CoA carboxylase (accB) (Nostoc sp. (strain PCC 7120 / SAG 25.82 / UTEX 2576)).